Here is a 306-residue protein sequence, read N- to C-terminus: Diterpene cyclase eriG (306 aa).

Helical transmembrane passes span 13-33 (IFFG…SIFA) and 43-63 (ATLV…IYFF). Asn64 is a glycosylation site (N-linked (GlcNAc...) asparagine). 4 helical membrane passes run 115–135 (FLPE…TSYG), 161–181 (IAPA…WAGL), 213–233 (LIIT…AGIF), and 265–285 (MFYT…GLGL).

The protein belongs to the UbiA prenyltransferase family. It depends on Mg(2+) as a cofactor.

It is found in the membrane. The catalysed reaction is (2E,6E,10E)-geranylgeranyl diphosphate = (-)-cyatha-3,12-diene + diphosphate. The protein operates within secondary metabolite biosynthesis. With respect to regulation, EDTA completely blocks the reaction. Its function is as follows. Diterpene cyclase; part of the gene cluster that mediates the biosynthesis of erinacines, cyathane-xylosides that show unique biological activities, including leishmanicidal activity, stimulating activity for nerve growth-factor synthesis, and agonistic activity toward the kappa opioid receptor. Within the pathway, eriG acts as a diterpene cyclase that converts geranylgeranyl diphosphate (GGPP) into cyatha-3,12-diene. EriG is unable to use geranyl diphosphate (GPP) or farnesyl diphosphate (FPP) as substrates. The first step of the erinacines biosynthesis pathway is catalyzed by the geranylgeranyl diphosphate (GGPP) synthase eriE via conversion of farnesyl pyrophosphate and isopentyl pyrophosphate into geranylgeranyl pyrophosphate (GGPP). GGPP is then substrate of the diterpene cyclase eriG for the production of cyatha-3,12-diene. The cytochrome P450 monooxygenase eriI then hydroxylates cyatha-3,12-diene at C-14 of the seven-membered ring to produce erinacol, which is further hydroxylated at C-15 by the cytochrome P450 monooxygenase eriC to yield cyathadiol. The cytochrome P450 monooxygenase eriA then catalyzes C-11 hydroxylation in the presence of the short chain dehydrogenase/reductase (SDR) eriH, which leads to the production of cyathatriol. The acetyltransferase eriL converts cyathatriol into 11-O-acetyl-cyathatriol. The SDR eriH catalyzes further oxidation of 11-O-acetyl-cyathatriol into 1-O-acetylcyathin A3. Finally, the glycosyl transferase eriJ tranfers xylose from UDP-xylose onto C-14 of 11-O-acetyl-cyathatriol to form eracine Q. EriJ is also able to convert 11-O-acetyl-cyathatriol to eracine Q2 by using UDP-D-glucose as cosubstrate, but at a lower rate. This chain is Diterpene cyclase eriG, found in Hericium erinaceus (Lion's mane mushroom).